We begin with the raw amino-acid sequence, 1093 residues long: Mediator of RNA polymerase II transcription subunit 14 (1093 aa).

2 disordered regions span residues 1–61 and 1035–1060; these read MPGV…KIDG and TKSD…SQAA. Positions 19 to 31 are enriched in polar residues; the sequence is DTQTPSNGDNLRN. Basic and acidic residues predominate over residues 41–61; that stretch reads KGDKDHDPDKESYTGKPKIDG. The span at 1040-1056 shows a compositional bias: polar residues; that stretch reads DYSTQPVPEKQSQTGAP.

This sequence belongs to the Mediator complex subunit 14 family. Component of the Mediator complex.

The protein resides in the nucleus. In terms of biological role, component of the Mediator complex, a coactivator involved in the regulated transcription of nearly all RNA polymerase II-dependent genes. Mediator functions as a bridge to convey information from gene-specific regulatory proteins to the basal RNA polymerase II transcription machinery. Mediator is recruited to promoters by direct interactions with regulatory proteins and serves as a scaffold for the assembly of a functional preinitiation complex with RNA polymerase II and the general transcription factors. The protein is Mediator of RNA polymerase II transcription subunit 14 (rgr1) of Neosartorya fischeri (strain ATCC 1020 / DSM 3700 / CBS 544.65 / FGSC A1164 / JCM 1740 / NRRL 181 / WB 181) (Aspergillus fischerianus).